Consider the following 325-residue polypeptide: MRVENNNVSGQNHDPEQIDLIDLLVQLWRGKMTIIISVIVAIALAIGYLAVAKEKWTSTAIITQPDVGQIAGYNNAMNVIYGQAAPKVSDLQETLIGRFSSAFSALAETLDNQEEPEKLTIEPSVKNQQLPLTVSYVGQTAEGAQMKLAQYIQQVDDKVNQELEKDLKDNIALGRKNLQDSLRTQEVVAQEQKDLRIRQIQEALQYANQAQVTKPQIQQTQDVTQDTMFLLGSEALESMIKHEATRPLVFSSNYYQTRQNLLDIDNLDVDKLDIHAYRYVMKPTLPIRRDSPKKAITLILAVLLGGMVGAGIVLGRNALRNYNAK.

Residues 1 to 31 (MRVENNNVSGQNHDPEQIDLIDLLVQLWRGK) lie on the Cytoplasmic side of the membrane. Residues 32–52 (MTIIISVIVAIALAIGYLAVA) traverse the membrane as a helical segment. Residues 53-294 (KEKWTSTAII…LPIRRDSPKK (242 aa)) lie on the Periplasmic side of the membrane. Residues 295–315 (AITLILAVLLGGMVGAGIVLG) traverse the membrane as a helical segment. Topologically, residues 316-325 (RNALRNYNAK) are cytoplasmic.

It belongs to the WzzB/Cld/Rol family.

Its subcellular location is the cell inner membrane. It participates in bacterial outer membrane biogenesis; lipopolysaccharide biosynthesis. Its function is as follows. Confers a modal distribution of chain length on the O-antigen component of lipopolysaccharide (LPS). Gives rise to a reduced number of short chain molecules and increases in numbers of longer molecules, with a modal value of 13 (in strain O111/M92) and of 17 (in strain K12). The polypeptide is Chain length determinant protein (wzzB) (Escherichia coli).